The chain runs to 485 residues: Alpha-amylase (485 aa).

An N-terminal signal peptide occupies residues 1 to 18 (MFLTSVLILCSLAALSLG). Pyrrolidone carboxylic acid is present on glutamine 19. Cysteine 46 and cysteine 102 are disulfide-bonded. Residues asparagine 116, arginine 164, and aspartate 173 each coordinate Ca(2+). An intrachain disulfide couples cysteine 152 to cysteine 166. Arginine 201 serves as a coordination point for chloride. The active-site Nucleophile is aspartate 203. Position 207 (histidine 207) interacts with Ca(2+). Glutamate 240 (proton donor) is an active-site residue. Chloride contacts are provided by asparagine 303 and arginine 339. An intrachain disulfide couples cysteine 439 to cysteine 451. Residue asparagine 448 is glycosylated (N-linked (GlcNAc...) asparagine).

The protein belongs to the glycosyl hydrolase 13 family. In terms of assembly, monomer. It depends on Ca(2+) as a cofactor. Requires chloride as cofactor. Expressed in larval and adult gut.

Its subcellular location is the secreted. The catalysed reaction is Endohydrolysis of (1-&gt;4)-alpha-D-glucosidic linkages in polysaccharides containing three or more (1-&gt;4)-alpha-linked D-glucose units.. The chain is Alpha-amylase from Phaedon cochleariae (Mustard beetle).